A 241-amino-acid chain; its full sequence is ATP synthase subunit a (241 aa).

The next 8 helical transmembrane spans lie at 29–49, 54–74, 86–106, 114–134, 153–173, 177–197, 200–220, and 221–241; these read NSSFFTMISVILMILFLLFGI, VIPGYLQAAVEYVYDFVISII, IPLIFTVFIFILSCNLVGVLP, HVIVTFALSMVVFIYITIVGF, WLAPIIIIIKLFAYLVRPVSL, LAANMIAGHTIIKVIAGFIVN, IFFTPAPFLFIIALIGFEVFV, and AILQAYIFTILTCVYLSDAVK.

Belongs to the ATPase A chain family. As to quaternary structure, F-type ATPases have 2 components, CF(1) - the catalytic core - and CF(0) - the membrane proton channel. CF(1) has five subunits: alpha(3), beta(3), gamma(1), delta(1), epsilon(1). CF(0) has three main subunits: a(1), b(2) and c(9-12). The alpha and beta chains form an alternating ring which encloses part of the gamma chain. CF(1) is attached to CF(0) by a central stalk formed by the gamma and epsilon chains, while a peripheral stalk is formed by the delta and b chains.

The protein localises to the cell membrane. Its function is as follows. Key component of the proton channel; it plays a direct role in the translocation of protons across the membrane. In Wolbachia pipientis wMel, this protein is ATP synthase subunit a.